The following is a 164-amino-acid chain: V-type proton ATPase subunit c' (164 aa).

At 1-16 (MDMVASDNVYAPLYAP) the chain is on the lumenal side. A helical transmembrane segment spans residues 17-37 (FFGFAGCALAMILSCLGAAIG). Residues 38-59 (TAKSGIGIAGIGTFKPELIMKS) are Cytoplasmic-facing. The helical transmembrane segment at 60–80 (LIPVVMSGILAIYGLVVAVLI) threads the bilayer. The Lumenal segment spans residues 81-98 (AGNLSPTEEYTLFNGFMH). A helical membrane pass occupies residues 99-119 (LSCGLCVGFACLSSGYAIGIV). Topologically, residues 120–136 (GDVGVRKYMHQPRLFVG) are cytoplasmic. Residues 137 to 157 (IVLILIFSEVLGLYGMIIALI) form a helical membrane-spanning segment. The Lumenal portion of the chain corresponds to 158-164 (LNTKGSE).

Belongs to the V-ATPase proteolipid subunit family. V-ATPase is a heteromultimeric enzyme composed of a peripheral catalytic V1 complex (components A to H) attached to an integral membrane V0 proton pore complex (components: a, c, c', c'', d, e, f and VOA1). The decameric c-ring forms the proton-conducting pore, and is composed of eight proteolipid subunits c, one subunit c' and one subunit c''.

It is found in the vacuole membrane. Proton-conducting pore forming subunit of the V0 complex of vacuolar(H+)-ATPase (V-ATPase), a multisubunit enzyme composed of a peripheral complex (V1) that hydrolyzes ATP and a membrane integral complex (V0) that translocates protons. V-ATPase is responsible for acidifying and maintaining the pH of intracellular compartments. The protein is V-type proton ATPase subunit c' (VMA11) of Candida glabrata (strain ATCC 2001 / BCRC 20586 / JCM 3761 / NBRC 0622 / NRRL Y-65 / CBS 138) (Yeast).